The chain runs to 417 residues: UDP-N-acetylglucosamine 1-carboxyvinyltransferase 2 (417 aa).

22–23 (KN) contacts phosphoenolpyruvate. Arg-92 contacts UDP-N-acetyl-alpha-D-glucosamine. Residue Cys-116 is the Proton donor of the active site. Position 116 is a 2-(S-cysteinyl)pyruvic acid O-phosphothioketal (Cys-116). Residues 121–125 (RPIDL), Asp-305, and Ile-327 each bind UDP-N-acetyl-alpha-D-glucosamine.

The protein belongs to the EPSP synthase family. MurA subfamily.

It is found in the cytoplasm. The enzyme catalyses phosphoenolpyruvate + UDP-N-acetyl-alpha-D-glucosamine = UDP-N-acetyl-3-O-(1-carboxyvinyl)-alpha-D-glucosamine + phosphate. The protein operates within cell wall biogenesis; peptidoglycan biosynthesis. Functionally, cell wall formation. Adds enolpyruvyl to UDP-N-acetylglucosamine. This is UDP-N-acetylglucosamine 1-carboxyvinyltransferase 2 from Caldanaerobacter subterraneus subsp. tengcongensis (strain DSM 15242 / JCM 11007 / NBRC 100824 / MB4) (Thermoanaerobacter tengcongensis).